Here is a 152-residue protein sequence, read N- to C-terminus: Deoxyuridine 5'-triphosphate nucleotidohydrolase (152 aa).

Substrate-binding positions include 72–74 (RSG), Asn-85, and 89–91 (TVD).

Belongs to the dUTPase family. Mg(2+) is required as a cofactor.

The enzyme catalyses dUTP + H2O = dUMP + diphosphate + H(+). The protein operates within pyrimidine metabolism; dUMP biosynthesis; dUMP from dCTP (dUTP route): step 2/2. Its function is as follows. This enzyme is involved in nucleotide metabolism: it produces dUMP, the immediate precursor of thymidine nucleotides and it decreases the intracellular concentration of dUTP so that uracil cannot be incorporated into DNA. This Nitrobacter hamburgensis (strain DSM 10229 / NCIMB 13809 / X14) protein is Deoxyuridine 5'-triphosphate nucleotidohydrolase.